Here is a 1397-residue protein sequence, read N- to C-terminus: MDAYALPTYFPLAYSELQFLASRRAAAVAAAATVLPGSPCINQHHPTDVSSSVTVPSIIPTGGTSDSIKTSIQPQICNENTLLGNAGHQHNHQPQHVHNINVTGQPHDFHPAYRIPGYMEQLYSLQRTNSASSFHDPYVNCASAFHLAGLGLGSADFLGSRGLSSLGELHNAAVAAAAAGSLASTDFHFSVDGNRRLGSPRPPGGSIRASISRKRALSSSPYSDSFDINSMIRFSPNSLATIMNGSRGSSAASGSYGHISATALNPMSHVHSTRLQQIQAHLLRASAGLLNPMTPQQVAASGFSIGHMPTSASLRVNDVHPNLSDSHIQITTSPTVTKDVSQVPAAAFSLKNLDDAREKKGPFKDVVPEQPSSTSGGVAQVEADSASSQLSDRCYNNVVNNITGIPGDVKVNSRLDEYINCGSISIPSNEYDCANADTTDIKDEPGDFIETNCHWRSCRIEFITQDELVKHINNDHIQTNKKAFVCRWEDCTRGEKPFKAQYMLVVHMRRHTGEKPHKCTFEGCFKAYSRLENLKTHLRSHTGEKPYTCEYPGCSKAFSNASDRAKHQNRTHSNEKPYICKAPGCTKRYTDPSSLRKHVKTVHGAEFYANKKHKGLPLNDANSRLQQNNSRHNLQEHNIDSSPCSEDSHLGKMLGTSSPSIKSESDISSSNHHLVNGVRASDSLLTYSPDDLAENLNLDDGWNCDDDVDVADLPIVLRAMVNIGNGNASASTIGGSVLARQRFRGRLQTKGINSSTIMLCNIPESNRTFGISELNQRITELKMEPGTDAEIKIPKLPNTTIGGYTEDPLQNQTSFRNTVSNKQGTVSGSIQGQFRRDSQNSTASTYYGSMQSRRSSQSSQVSSIPTMRPNPSCNSTASFYDPISPGCSRRSSQMSNGANCNSFTSTSGLPVLNKESNKSLNACINKPNIGVQGVGIYNSSLPPPPSSHLIATNLKRLQRKDSEYHNFTSGRFSVPSYMHSLHIKNNKPVGENEFDKAIASNARRQTDPVPNINLDPLTNISRFSTTPHSFDINVGKTNNIASSINKDNLRKDLFTVSIKADMAMTSDQHPNERINLDEVEELILPDEMLQYLNLVKDDTNHLEKEHQAVPVGSNVSETIASNHYREQSNIYYTNKQILTPPSNVDIQPNTTKFTVQDKFAMTAVGGSFSQRELSTLAVPNEHGHAKCESFHHQSQKYMNTDIGSKQQSALPSAHQRQTEKSNYNQIIDSSMTSLPELNVDSIYPRNETENIFKVHGDHDNEIQCGIISQSQMSPSTNLNNDGQFSTVNMQPITTSKLFPPEPQKIVCDTQASNTSVMHLDTYQRTLEYVQSCQNWMETNNTSTNQIQSLPGMPVNNTLFPDVSSSTHPYHGTNMVINDMTTSLTSLLEENRYLQMMQ.

Positions 1 to 440 (MDAYALPTYF…YDCANADTTD (440 aa)) are interaction with RDX. Disordered stretches follow at residues 193-212 (GNRRLGSPRPPGGSIRASIS) and 361-383 (GPFKDVVPEQPSSTSGGVAQVEA). 5 consecutive C2H2-type zinc fingers follow at residues 451–476 (TNCHWRSCRIEFITQDELVKHINNDH), 484–511 (FVCRWEDCTRGEKPFKAQYMLVVHMRRH), 517–541 (HKCTFEGCFKAYSRLENLKTHLRSH), 547–572 (YTCEYPGCSKAFSNASDRAKHQNRTH), and 578–603 (YICKAPGCTKRYTDPSSLRKHVKTVH). Disordered stretches follow at residues 636-669 (EHNIDSSPCSEDSHLGKMLGTSSPSIKSESDISS) and 807-877 (DPLQ…NSTA). Residues 657 to 669 (SSPSIKSESDISS) are compositionally biased toward low complexity. 2 stretches are compositionally biased toward polar residues: residues 807-832 (DPLQNQTSFRNTVSNKQGTVSGSIQG) and 839-848 (QNSTASTYYG). Residues 849-863 (SMQSRRSSQSSQVSS) show a composition bias toward low complexity. Positions 1161–1397 (MTAVGGSFSQ…EENRYLQMMQ (237 aa)) are interaction with RDX.

This sequence belongs to the GLI C2H2-type zinc-finger protein family. Interacts with RDX. Interacts with cos. Interacts with slmb; the interaction is enhanced by phosphorylation by CkIalpha and dco. Post-translationally, polyubiquitinated by RDX in the presence of CUL3, which results in proteasomal degradation. Phosphorylated on multiple sites by protein kinase A (PKA) and phosphorylation by PKA primes further phosphorylation by CK1 and GSK3. Phosphorylation is essential for its proteolytic processing. cos recruits multiple kinases to promote efficient phosphorylation of ci while Hh signaling inhibits phosphorylation by restricting the accessibility of ci to the kinases. Phosphorylation by CkIalpha and dco enhances binding to Slmb, the F-box recognition component of the SCF(slmb) E3 ubiquitin-protein ligase required for ci processing. In terms of processing, transcriptional repressor ciR, a C-terminally truncated form, is generated from the full-length ci (ciFL/ci-155) through proteolytic processing. Hh suppresses the formation of ci75 and promotes the conversion of ci155 into a transcriptional activator (ci155A).

The protein resides in the nucleus. Has a dual function as a transcriptional activator and a repressor of the hedgehog (Hh) pathway. The full-length ci form (ciFL), acts as an activator (ciA) while ciR, its C-terminally truncated form, acts as a repressor. Involved in segment polarity. Required for the normal development of the posterior half of each embryonic segment. Engrailed protein directly represses ci expression in posterior compartment cells. Essential component of a hh-signaling pathway which regulates the Duox-dependent gut immune response to bacterial uracil; required to activate Cad99C-dependent endosome formation, norpA-dependent Ca2+ mobilization and p38 MAPK, which are essential steps in the Duox-dependent production of reactive oxygen species (ROS) in response to intestinal bacterial infection. The sequence is that of Transcriptional activator cubitus interruptus (ci) from Drosophila melanogaster (Fruit fly).